The primary structure comprises 336 residues: Dihydroorotate dehydrogenase (quinone) (336 aa).

Residues 62-66 (AGLDK) and Thr86 contribute to the FMN site. Lys66 is a substrate binding site. 111-115 (NRMGF) contributes to the substrate binding site. Asn139 and Asn172 together coordinate FMN. Asn172 lines the substrate pocket. Ser175 acts as the Nucleophile in catalysis. Asn177 is a binding site for substrate. FMN contacts are provided by Lys217 and Thr245. 246-247 (NT) serves as a coordination point for substrate. Residues Gly268, Gly297, and 318–319 (YS) each bind FMN.

The protein belongs to the dihydroorotate dehydrogenase family. Type 2 subfamily. In terms of assembly, monomer. The cofactor is FMN.

It localises to the cell membrane. It catalyses the reaction (S)-dihydroorotate + a quinone = orotate + a quinol. It participates in pyrimidine metabolism; UMP biosynthesis via de novo pathway; orotate from (S)-dihydroorotate (quinone route): step 1/1. Catalyzes the conversion of dihydroorotate to orotate with quinone as electron acceptor. This Yersinia enterocolitica serotype O:8 / biotype 1B (strain NCTC 13174 / 8081) protein is Dihydroorotate dehydrogenase (quinone).